The following is a 634-amino-acid chain: Tyrosine-protein kinase transforming protein erbB (634 aa).

Positions 132-399 (FKKVKVLGSG…KMARDPPRYL (268 aa)) constitute a Protein kinase domain. Residues 138-146 (LGSGAFGTV) and K165 contribute to the ATP site. D257 serves as the catalytic Proton acceptor.

Belongs to the protein kinase superfamily. Tyr protein kinase family. EGF receptor subfamily.

The enzyme catalyses L-tyrosyl-[protein] + ATP = O-phospho-L-tyrosyl-[protein] + ADP + H(+). The polypeptide is Tyrosine-protein kinase transforming protein erbB (V-ERBB) (Avian leukosis virus (ALV)).